The following is a 185-amino-acid chain: MADHLMLAEGYSLVPRPPPAAPAHGPHALRTLQPYSSPGLDSGLRPRGAPLGPPPPPQGTVAYGAFGPSPTFQPFPAVPPPAAGNAHLQPVATLYPGRATMPPGAPGGPSGPQPAPGAPAPPLQPPAHALGGMDAELIDEEALTSLELELGLHRVRDLPELFLGQSEFDCFSDLGSAPPAGSVSC.

Disordered stretches follow at residues 15–64 and 95–130; these read PRPP…VAYG and YPGRATMPPGAPGGPSGPQPAPGAPAPPLQPPAHAL. A compositionally biased stretch (pro residues) spans 103-125; sequence PGAPGGPSGPQPAPGAPAPPLQP.

The protein belongs to the CITED family. In terms of assembly, interacts via its C-terminal region with the CH1 domain of CREBBP and EP300. Interacts with all TFAP2/AP-2 isoforms.

Its subcellular location is the nucleus. The protein resides in the cytoplasm. Its function is as follows. Acts as a transcriptional coactivator for TFAP2/AP-2. Enhances estrogen-dependent transactivation mediated by estrogen receptors. May function as an inhibitor of transactivation by HIF1A by disrupting HIF1A interaction with CREBBP. May be involved in regulation of gene expression during development and differentiation of blood cells, endothelial cells and mammary epithelial cells. The protein is Cbp/p300-interacting transactivator 4 (CITED4) of Bos taurus (Bovine).